A 136-amino-acid polypeptide reads, in one-letter code: UPF0216 protein PF0452 (136 aa).

It belongs to the UPF0216 family.

This chain is UPF0216 protein PF0452, found in Pyrococcus furiosus (strain ATCC 43587 / DSM 3638 / JCM 8422 / Vc1).